The chain runs to 111 residues: NADH-ubiquinone oxidoreductase chain 4 (111 aa).

The helical transmembrane segment at 35–55 threads the bilayer; that stretch reads LITSLFSWLDITVFLTGLSAF.

Belongs to the complex I subunit 4 family.

It localises to the mitochondrion membrane. The enzyme catalyses a ubiquinone + NADH + 5 H(+)(in) = a ubiquinol + NAD(+) + 4 H(+)(out). Its function is as follows. Core subunit of the mitochondrial membrane respiratory chain NADH dehydrogenase (Complex I) that is believed to belong to the minimal assembly required for catalysis. Complex I functions in the transfer of electrons from NADH to the respiratory chain. The immediate electron acceptor for the enzyme is believed to be ubiquinone. The protein is NADH-ubiquinone oxidoreductase chain 4 (MT-ND4) of Caiman crocodilus (Spectacled caiman).